The sequence spans 417 residues: MADIRNFTLNFGPQHPAAHGVLRLVLELDGEVVQRADPHIGLLHRATEKLAETRTWVQSVPYMDRLDYVSMMCNEHAYCLATEKLLGIEVPERGKYIRVMFDEVTRILNHLLWIGCHALDVGAMTMALYTFREREDLMDVYEAVSGARMHAAYYRPGGVYRDLPDRMPQYQESTWTNAKKAAEKNENRSGSVLDFLEDFTNRFPTYHSEYHTLLTDNRIWKQRLVNVGVVTPERALQMGFTGAMLRGSGIAWDLRKKQPYAAYDKINFDVPVGVNGDSYDRYLVRMEEMIQSNNIIKQCIAWLRKNPGPVITDNNKVAPPPRENMKTNMEELIHHFKLFTEGIHVPAGEAYAAVEHPKGEFGIYFVSDGANKPYRMKIRAPGFVHLAGLDEMSRGHMIADVVTIIGSQDIVFGEIDR.

The protein belongs to the complex I 49 kDa subunit family. NDH-1 is composed of 14 different subunits. Subunits NuoB, C, D, E, F, and G constitute the peripheral sector of the complex.

It is found in the cell inner membrane. The enzyme catalyses a quinone + NADH + 5 H(+)(in) = a quinol + NAD(+) + 4 H(+)(out). Functionally, NDH-1 shuttles electrons from NADH, via FMN and iron-sulfur (Fe-S) centers, to quinones in the respiratory chain. The immediate electron acceptor for the enzyme in this species is believed to be ubiquinone. Couples the redox reaction to proton translocation (for every two electrons transferred, four hydrogen ions are translocated across the cytoplasmic membrane), and thus conserves the redox energy in a proton gradient. In Dechloromonas aromatica (strain RCB), this protein is NADH-quinone oxidoreductase subunit D.